The primary structure comprises 428 residues: Leucine-rich repeat-containing protein 42 (428 aa).

LRR repeat units lie at residues 149 to 170, 174 to 195, 202 to 222, 234 to 255, and 259 to 280; these read VLCS…EEIK, ELTC…LEHL, SVTQ…RKMT, NLTL…GYLF, and KLNC…KHKL. The tract at residues 379–412 is disordered; it reads KHEAISSQESKKSKKRPFEESETEQNNSSQPSKQ. Ser-406 and Ser-407 each carry phosphoserine.

Belongs to the LRRC42 family.

The protein is Leucine-rich repeat-containing protein 42 (LRRC42) of Homo sapiens (Human).